The sequence spans 283 residues: uncharacterized protein (283 aa).

Asp121 is a catalytic residue.

This sequence belongs to the pseudouridine synthase RluA family.

It catalyses the reaction a uridine in RNA = a pseudouridine in RNA. This is an uncharacterized protein from Bacillus subtilis (strain 168).